Reading from the N-terminus, the 142-residue chain is Putative pre-16S rRNA nuclease (142 aa).

This sequence belongs to the YqgF nuclease family.

The protein resides in the cytoplasm. Functionally, could be a nuclease involved in processing of the 5'-end of pre-16S rRNA. The chain is Putative pre-16S rRNA nuclease from Mycoplasmoides gallisepticum (strain R(low / passage 15 / clone 2)) (Mycoplasma gallisepticum).